A 289-amino-acid chain; its full sequence is Diaminopimelate epimerase (289 aa).

3 residues coordinate substrate: N13, Q47, and N67. C76 (proton donor) is an active-site residue. Residues 77–78, N167, N200, and 218–219 contribute to the substrate site; these read GN and ER. C227 functions as the Proton acceptor in the catalytic mechanism. 228–229 provides a ligand contact to substrate; that stretch reads GT.

Belongs to the diaminopimelate epimerase family. As to quaternary structure, homodimer.

The protein resides in the cytoplasm. The enzyme catalyses (2S,6S)-2,6-diaminopimelate = meso-2,6-diaminopimelate. It participates in amino-acid biosynthesis; L-lysine biosynthesis via DAP pathway; DL-2,6-diaminopimelate from LL-2,6-diaminopimelate: step 1/1. Its function is as follows. Catalyzes the stereoinversion of LL-2,6-diaminopimelate (L,L-DAP) to meso-diaminopimelate (meso-DAP), a precursor of L-lysine and an essential component of the bacterial peptidoglycan. This is Diaminopimelate epimerase from Burkholderia ambifaria (strain ATCC BAA-244 / DSM 16087 / CCUG 44356 / LMG 19182 / AMMD) (Burkholderia cepacia (strain AMMD)).